The following is a 231-amino-acid chain: Ion-translocating oxidoreductase complex subunit E (231 aa).

The next 6 membrane-spanning stretches (helical) occupy residues 18–38, 39–59, 63–83, 86–106, 125–145, and 182–202; these read ALVQ…ATNA, LGLG…ISTL, TPAE…VSAV, LINA…PLIV, ALSA…MFVL, and PFLL…MLAG.

It belongs to the NqrDE/RnfAE family. As to quaternary structure, the complex is composed of six subunits: RsxA, RsxB, RsxC, RsxD, RsxE and RsxG.

It localises to the cell inner membrane. In terms of biological role, part of a membrane-bound complex that couples electron transfer with translocation of ions across the membrane. Required to maintain the reduced state of SoxR. This is Ion-translocating oxidoreductase complex subunit E from Escherichia coli (strain ATCC 8739 / DSM 1576 / NBRC 3972 / NCIMB 8545 / WDCM 00012 / Crooks).